The chain runs to 405 residues: MRILTFTGKGGVGKTSVSAATAVRLSEMGHRTLVLSTDPAHSLSDSFNLQLGAEPTKIKENLHAIEVNPYVDLKENWHSVQKYYTRVFMAQGVSGVMADEMTILPGMEELFSLLRIKRYKSTGLYDALVLDTAPTGETLRLLSLPDTLSWGMKAVKNVNKYIVRPLSKPLSKMSDKIAYYIPPEDAIESVDQVFDELEDIRDILTDNVKSTVRLVMNAEKMSIKETMRALTYLNLYGFKVDMVLVNKLLDAQENSGYLEKWKGIQQKYLGEIEEGFSPLPVKKLKMYDQEIVGVKSLEVFAHDIYGDTDPSDMMYDEPPIKFVRKGDIYEVQLKLMFANPVDIDVWVTGDELFVQIGNQRKIITLPVSLTGLEPGDAVFRDKWLHIPFDLEKQGQHHRTREFNKA.

ATP is bound at residue 8–15 (GKGGVGKT).

It belongs to the arsA ATPase family.

It catalyses the reaction arsenite(in) + ATP + H2O = arsenite(out) + ADP + phosphate + H(+). Its function is as follows. Anion-transporting ATPase. Catalyzes the extrusion of arsenite. The polypeptide is Putative arsenical pump-driving ATPase (Prosthecochloris vibrioformis (Chlorobium vibrioforme)).